We begin with the raw amino-acid sequence, 279 residues long: Biotin synthase (279 aa).

A Radical SAM core domain is found at 2-232; that stretch reads VRNSRLDICS…NVTIKIAAGR (231 aa). [4Fe-4S] cluster contacts are provided by Cys20, Cys24, and Cys27. [2Fe-2S] cluster-binding residues include Cys96, Cys156, and Lys227.

The protein belongs to the radical SAM superfamily. Biotin synthase family. As to quaternary structure, homodimer. [4Fe-4S] cluster is required as a cofactor. [2Fe-2S] cluster serves as cofactor.

It carries out the reaction (4R,5S)-dethiobiotin + (sulfur carrier)-SH + 2 reduced [2Fe-2S]-[ferredoxin] + 2 S-adenosyl-L-methionine = (sulfur carrier)-H + biotin + 2 5'-deoxyadenosine + 2 L-methionine + 2 oxidized [2Fe-2S]-[ferredoxin]. It functions in the pathway cofactor biosynthesis; biotin biosynthesis; biotin from 7,8-diaminononanoate: step 2/2. Catalyzes the conversion of dethiobiotin (DTB) to biotin by the insertion of a sulfur atom into dethiobiotin via a radical-based mechanism. The sequence is that of Biotin synthase from Thermotoga neapolitana (strain ATCC 49049 / DSM 4359 / NBRC 107923 / NS-E).